A 689-amino-acid polypeptide reads, in one-letter code: Quinidine resistance protein 3 (689 aa).

Positions methionine 1–asparagine 24 are enriched in polar residues. Positions methionine 1 to glutamate 73 are disordered. Topologically, residues methionine 1 to methionine 108 are extracellular. Composition is skewed to basic and acidic residues over residues methionine 29–asparagine 51 and serine 59–glutamate 73. Residues isoleucine 109 to isoleucine 131 traverse the membrane as a helical segment. Residues asparagine 132–lysine 139 lie on the Cytoplasmic side of the membrane. The helical transmembrane segment at threonine 140–tryptophan 163 threads the bilayer. The Extracellular portion of the chain corresponds to serine 164 to threonine 175. A helical membrane pass occupies residues tyrosine 176–alanine 193. Topologically, residues proline 194–serine 235 are cytoplasmic. The helical transmembrane segment at tyrosine 236 to valine 256 threads the bilayer. The Extracellular portion of the chain corresponds to asparagine 257–glutamine 265. The helical transmembrane segment at tryptophan 266–leucine 283 threads the bilayer. The Cytoplasmic segment spans residues proline 284 to proline 475. The residue at position 436 (serine 436) is a Phosphoserine. Residues valine 476 to valine 493 form a helical membrane-spanning segment. Residues asparagine 494–proline 510 lie on the Extracellular side of the membrane. A helical transmembrane segment spans residues leucine 511–glycine 532. The Cytoplasmic segment spans residues arginine 533–asparagine 558. The helical transmembrane segment at valine 559–leucine 577 threads the bilayer. The Extracellular portion of the chain corresponds to aspartate 578–proline 586. A helical transmembrane segment spans residues leucine 587 to valine 609. Residues aspartate 610 to asparagine 624 are Cytoplasmic-facing. Residues leucine 625 to leucine 642 traverse the membrane as a helical segment. Residues asparagine 643–glycine 648 are Extracellular-facing. Residues tryptophan 649–leucine 668 form a helical membrane-spanning segment. The Cytoplasmic segment spans residues lysine 669–aspartate 689.

The protein belongs to the major facilitator superfamily. CAR1 family.

The protein localises to the cell membrane. Multidrug resistance transporter involved in resistance and adaptation to quinidine and to the herbicide barban (4-chloro-2-butynyl [3-chlorophenyl] carbamate). The polypeptide is Quinidine resistance protein 3 (QDR3) (Saccharomyces cerevisiae (strain ATCC 204508 / S288c) (Baker's yeast)).